Reading from the N-terminus, the 540-residue chain is Phosphatidylinositol 4-phosphate 5-kinase type-1 beta (540 aa).

Residues Met-1–Tyr-21 are disordered. The 371-residue stretch at Ala-25–Val-395 folds into the PIPK domain. A phosphoserine mark is found at Ser-445, Ser-447, and Ser-448.

Interacts with RAC1, AJUBA, PLD1, PLD2 and ARF1. Detected in heart, pancreas, brain, kidney, skeletal muscle and lung.

The protein resides in the cytoplasm. It localises to the cytosol. Its subcellular location is the cell membrane. The protein localises to the endomembrane system. It carries out the reaction a 1,2-diacyl-sn-glycero-3-phospho-(1D-myo-inositol 4-phosphate) + ATP = a 1,2-diacyl-sn-glycero-3-phospho-(1D-myo-inositol-4,5-bisphosphate) + ADP + H(+). It catalyses the reaction 1-octadecanoyl-2-(5Z,8Z,11Z,14Z)-eicosatetraenoyl-sn-glycero-3-phospho-1D-myo-inositol 4-phosphate + ATP = 1-octadecanoyl-2-(5Z,8Z,11Z,14Z)-eicosatetraenoyl-sn-glycero-3-phospho-1D-myo-inositol 4,5-bisphosphate + ADP + H(+). The enzyme catalyses 1-octadecanoyl-2-(9Z)-octadecenoyl-sn-glycero-3-phospho-1D-myo-inositol 4-phosphate + ATP = 1-octadecanoyl-2-(9Z)-octadecenoyl-sn-glycero-3-phospho-1D-myo-inositol 4,5-bisphosphate + ADP + H(+). The catalysed reaction is 1-octadecanoyl-2-(9Z)-octadecenoyl-sn-glycero-3-phospho-1D-myo-inositol + ATP = 1-octadecanoyl-2-(9Z)-octadecenoyl-sn-glycero-3-phospho-1D-myo-inositol 5-phosphate + ADP + H(+). It carries out the reaction 1-octadecanoyl-2-(9Z,12Z)-octadecadienoyl-sn-glycero-3-phospho-1D-myo-inositol + ATP = 1-octadecanoyl-2-(9Z,12Z)-octadecadienoyl-sn-glycero-3-phospho-1D-myo-inositol 5-phosphate + ADP + H(+). It catalyses the reaction 1-octadecanoyl-2-(5Z,8Z,11Z,14Z-eicosatetraenoyl)-sn-glycero-3-phospho-(1D-myo-inositol) + ATP = 1-octadecanoyl-2-(5Z,8Z,11Z,14Z)-eicosatetraenoyl-sn-glycero-3-phospho-1D-myo-inositol 5-phosphate + ADP + H(+). The enzyme catalyses 1,2-di-(9Z,12Z)-octadecadienoyl-sn-glycero-3-phospho-1D-myo-inositol + ATP = 1,2-di(9Z,12Z)-octadecadienoyl-sn-glycero-3-phospho-1D-myo-inositol 5-phosphate + ADP + H(+). Its function is as follows. Catalyzes the phosphorylation of phosphatidylinositol 4-phosphate (PtdIns(4)P/PI4P) to form phosphatidylinositol 4,5-bisphosphate (PtdIns(4,5)P2/PIP2), a lipid second messenger that regulates several cellular processes such as signal transduction, vesicle trafficking, actin cytoskeleton dynamics, cell adhesion, and cell motility. PtdIns(4,5)P2 can directly act as a second messenger or can be utilized as a precursor to generate other second messengers: inositol 1,4,5-trisphosphate (IP3), diacylglycerol (DAG) or phosphatidylinositol-3,4,5-trisphosphate (PtdIns(3,4,5)P3/PIP3). Mediates RAC1-dependent reorganization of actin filaments. Contributes to the activation of phospholipase PLD2. Together with PIP5K1A, is required, after stimulation by G-protein coupled receptors, for the synthesis of IP3 that will induce stable platelet adhesion. This chain is Phosphatidylinositol 4-phosphate 5-kinase type-1 beta, found in Homo sapiens (Human).